Reading from the N-terminus, the 249-residue chain is 3-deoxy-manno-octulosonate cytidylyltransferase (249 aa).

This sequence belongs to the KdsB family.

Its subcellular location is the cytoplasm. It catalyses the reaction 3-deoxy-alpha-D-manno-oct-2-ulosonate + CTP = CMP-3-deoxy-beta-D-manno-octulosonate + diphosphate. It functions in the pathway nucleotide-sugar biosynthesis; CMP-3-deoxy-D-manno-octulosonate biosynthesis; CMP-3-deoxy-D-manno-octulosonate from 3-deoxy-D-manno-octulosonate and CTP: step 1/1. The protein operates within bacterial outer membrane biogenesis; lipopolysaccharide biosynthesis. Activates KDO (a required 8-carbon sugar) for incorporation into bacterial lipopolysaccharide in Gram-negative bacteria. In Coxiella burnetii (strain RSA 331 / Henzerling II), this protein is 3-deoxy-manno-octulosonate cytidylyltransferase.